The sequence spans 250 residues: Probable aquaporin TIP1-1 (250 aa).

2 helical membrane-spanning segments follow: residues 25–44 and 58–77; these read AEFI…GMAF and LIAA…SVGA. An NPA 1 motif is present at residues 85–87; sequence NPA. The next 3 helical transmembrane spans lie at 103 to 121, 144 to 163, and 170 to 192; these read GLLY…CFLL, LVLE…ATAV, and LGTI…GGAF. The NPA 2 motif lies at 198-200; sequence NPA. Residues 216 to 233 traverse the membrane as a helical segment; sequence WVYWVGPLIGGGLAGVIY.

This sequence belongs to the MIP/aquaporin (TC 1.A.8) family. TIP (TC 1.A.8.10) subfamily. Expressed in roots and leaves.

Its subcellular location is the vacuole membrane. Aquaporins facilitate the transport of water and small neutral solutes across cell membranes. May be involved in transport from the vacuolar compartment to the cytoplasm. This chain is Probable aquaporin TIP1-1 (TIP1-1), found in Oryza sativa subsp. japonica (Rice).